The following is a 60-amino-acid chain: Cytotoxin 10 (60 aa).

4 disulfide bridges follow: Cys3-Cys21, Cys14-Cys38, Cys42-Cys53, and Cys54-Cys59.

The protein belongs to the three-finger toxin family. Short-chain subfamily. Type IA cytotoxin sub-subfamily. Monomer in solution; Homodimer and oligomer in the presence of negatively charged lipids forming a pore with a size ranging between 20 and 30 Angstroms. Expressed by the venom gland.

It localises to the secreted. It is found in the target cell membrane. Its function is as follows. Shows cytolytic activity on many different cells by forming pore in lipid membranes. In vivo, increases heart rate or kills the animal by cardiac arrest. In addition, it binds to heparin with high affinity, interacts with Kv channel-interacting protein 1 (KCNIP1) in a calcium-independent manner, and binds to integrin alpha-V/beta-3 (ITGAV/ITGB3) with moderate affinity. Has hemolytic activity towards human erythrocytes (EC(50)=0.162 uM) and cytolytic activity towards various cell lines. The chain is Cytotoxin 10 from Naja naja (Indian cobra).